A 250-amino-acid chain; its full sequence is Aminoglycoside 3'-phosphotransferase (250 aa).

D178 (proton acceptor) is an active-site residue.

This sequence belongs to the aminoglycoside phosphotransferase family.

It carries out the reaction kanamycin A + ATP = kanamycin 3'-phosphate + ADP + H(+). Resistance to kanamycin and structurally-related aminoglycosides, including amikacin. The polypeptide is Aminoglycoside 3'-phosphotransferase (aphA-7) (Campylobacter jejuni).